Reading from the N-terminus, the 725-residue chain is Endoglucanase G (725 aa).

An N-terminal signal peptide occupies residues 1 to 35 (MLKTKRKLTKAIGVALSISILSSLVSFIPQTNTYA). D93 acts as the Nucleophile in catalysis. Catalysis depends on residues H408, D446, and E455. One can recognise a CBM3 domain in the interval 489–650 (ITNDEVIIKA…GVKVFGNEPA (162 aa)). A Dockerin domain is found at 658–724 (PEILYGDVNS…LLGTITQLPQ (67 aa)).

It belongs to the glycosyl hydrolase 9 (cellulase E) family.

It carries out the reaction Endohydrolysis of (1-&gt;4)-beta-D-glucosidic linkages in cellulose, lichenin and cereal beta-D-glucans.. Its pathway is glycan metabolism; cellulose degradation. Its function is as follows. The biological conversion of cellulose to glucose generally requires three types of hydrolytic enzymes: (1) Endoglucanases which cut internal beta-1,4-glucosidic bonds; (2) Exocellobiohydrolases that cut the disaccharide cellobiose from the non-reducing end of the cellulose polymer chain; (3) Beta-1,4-glucosidases which hydrolyze the cellobiose and other short cello-oligosaccharides to glucose. This chain is Endoglucanase G (celCCG), found in Ruminiclostridium cellulolyticum (strain ATCC 35319 / DSM 5812 / JCM 6584 / H10) (Clostridium cellulolyticum).